Consider the following 1269-residue polypeptide: Rho GTPase-activating protein 29 (1269 aa).

Phosphoserine occurs at positions 171, 176, 179, and 190. One can recognise an F-BAR domain in the interval 192-462 (IELDSMLLKN…SAKLYDPGQE (271 aa)). Positions 296 to 418 (RKNEMEKQRK…EILTQLRKLV (123 aa)) form a coiled coil. 2 disordered regions span residues 472–523 (SAEE…NSAD) and 540–599 (DSES…NSLG). Phosphoserine is present on residues serine 499, serine 519, and serine 552. Residues 540–559 (DSESTGGSSESRSLDSESIS) show a composition bias toward low complexity. The segment at 612–657 (THKFRKLRSPTKCRDCEGIVVFHGVECEECLLVCHRKCLENLVIIC) adopts a Phorbol-ester/DAG-type zinc-finger fold. A Rho-GAP domain is found at 671-886 (AEFTQVAKKE…FLITYSQKIF (216 aa)). The segment at 909–936 (PGYLPKSLLSPEERDPERSMKSLFFSSK) is disordered. At serine 918 the chain carries Phosphoserine. Over residues 919 to 928 (PEERDPERSM) the composition is skewed to basic and acidic residues. Phosphoserine is present on residues serine 954 and serine 1026. A disordered region spans residues 1120–1269 (RSSGDHPVSI…DLEDEIPQFV (150 aa)). Residues 1128–1145 (SITQPSKPYTEPVRSTRQ) are compositionally biased toward polar residues. A phosphoserine mark is found at serine 1152 and serine 1154. Over residues 1162 to 1172 (TPRTLQPQHWT) the composition is skewed to polar residues. The span at 1229-1241 (SRPEEKAEERDQP) shows a compositional bias: basic and acidic residues. Positions 1259-1269 (EDLEDEIPQFV) are enriched in acidic residues. The interval 1266–1269 (PQFV) is interaction with PTPN13/PTPL1.

In terms of assembly, interacts with PTPN13/PTPL1. Interacts with RAP2A via its coiled coil domain. Interacts with RASIP1.

GTPase activator for the Rho-type GTPases by converting them to an inactive GDP-bound state. Has strong activity toward RHOA, and weaker activity toward RAC1 and CDC42. May act as a specific effector of RAP2A to regulate Rho. In concert with RASIP1, suppresses RhoA signaling and dampens ROCK and MYH9 activities in endothelial cells and plays an essential role in blood vessel tubulogenesis. This chain is Rho GTPase-activating protein 29 (ARHGAP29), found in Bos taurus (Bovine).